Consider the following 357-residue polypeptide: Glutamyl endopeptidase (357 aa).

The N-terminal stretch at 1–29 is a signal peptide; that stretch reads MKGKFLKVSSLFVATLTTATLVSSPAANA. The propeptide occupies 30–68; that stretch reads LSSKAMDNHPQQTQTDKQQTPKIQKGGNLKPLEQRERAN. A disordered region spans residues 33–58; the sequence is KAMDNHPQQTQTDKQQTPKIQKGGNL. Over residues 40 to 54 the composition is skewed to low complexity; it reads QQTQTDKQQTPKIQK. Active-site charge relay system residues include His119, Asp161, and Ser237. Residues 282–357 form a disordered region; sequence NFANDDHPNN…NNNSDNPDAA (76 aa). 18 repeat units span residues 289-291, 292-294, 295-297, 298-300, 301-303, 304-306, 307-309, 310-312, 313-315, 316-318, 319-321, 322-324, 325-327, 328-330, 331-333, 337-339, 340-342, and 343-345. The 18 X 3 AA repeats of P-[DN]-N stretch occupies residues 289–345; sequence PNNPDNPDNPNNPDNPNNPDNPNNPDNPDNPNNPDNPNNPDNPNNPDQPNNPNNPDN. Residues 291–357 are compositionally biased toward low complexity; the sequence is NPDNPDNPNN…NNNSDNPDAA (67 aa).

This sequence belongs to the peptidase S1B family. Post-translationally, proteolytically cleaved by aureolysin (aur). This cleavage leads to the activation of SspA.

The protein resides in the secreted. The enzyme catalyses Preferential cleavage: Glu-|-Xaa, Asp-|-Xaa.. Its function is as follows. Preferentially cleaves peptide bonds on the carboxyl-terminal side of aspartate and glutamate. Along with other extracellular proteases it is involved in colonization and infection of human tissues. Required for proteolytic maturation of thiol protease SspB and inactivation of SspC, an inhibitor of SspB. It is the most important protease for degradation of fibronectin-binding protein (FnBP) and surface protein A, which are involved in adherence to host cells. May also protect bacteria against host defense mechanism by cleaving the immunoglobulin classes IgG, IgA and IgM. May be involved in the stability of secreted lipases. This Staphylococcus aureus (strain MRSA252) protein is Glutamyl endopeptidase (sspA).